The chain runs to 223 residues: Putative 3-methyladenine DNA glycosylase (223 aa).

The protein belongs to the DNA glycosylase MPG family.

The chain is Putative 3-methyladenine DNA glycosylase from Pseudomonas syringae pv. syringae (strain B728a).